The chain runs to 236 residues: Transcriptional activator protein SolR (236 aa).

The HTH luxR-type domain maps to 169 to 234 (VPESSAALTA…QAVVKAIAIG (66 aa)). Residues 193–212 (AYEIGQILRISERTVNFHVN) constitute a DNA-binding region (H-T-H motif).

This sequence belongs to the autoinducer-regulated transcriptional regulatory protein family.

The protein is Transcriptional activator protein SolR (solR) of Ralstonia nicotianae (strain ATCC BAA-1114 / GMI1000) (Ralstonia solanacearum).